The following is a 108-amino-acid chain: Nucleoid-associated protein Csal_1459 (108 aa).

Residues Glu84–Glu93 are compositionally biased toward basic and acidic residues. Positions Glu84–Phe108 are disordered.

The protein belongs to the YbaB/EbfC family. In terms of assembly, homodimer.

It localises to the cytoplasm. The protein localises to the nucleoid. Binds to DNA and alters its conformation. May be involved in regulation of gene expression, nucleoid organization and DNA protection. This Chromohalobacter salexigens (strain ATCC BAA-138 / DSM 3043 / CIP 106854 / NCIMB 13768 / 1H11) protein is Nucleoid-associated protein Csal_1459.